The primary structure comprises 451 residues: 2-succinylbenzoate--CoA ligase (451 aa).

The protein belongs to the ATP-dependent AMP-binding enzyme family. MenE subfamily.

The catalysed reaction is 2-succinylbenzoate + ATP + CoA = 2-succinylbenzoyl-CoA + AMP + diphosphate. It participates in quinol/quinone metabolism; 1,4-dihydroxy-2-naphthoate biosynthesis; 1,4-dihydroxy-2-naphthoate from chorismate: step 5/7. It functions in the pathway quinol/quinone metabolism; menaquinone biosynthesis. Converts 2-succinylbenzoate (OSB) to 2-succinylbenzoyl-CoA (OSB-CoA). This Lactococcus lactis subsp. lactis (strain IL1403) (Streptococcus lactis) protein is 2-succinylbenzoate--CoA ligase.